The following is a 1447-amino-acid chain: DNA-directed RNA polymerase subunit beta' (1447 aa).

Zn(2+) contacts are provided by cysteine 70, cysteine 72, cysteine 85, and cysteine 88. The Mg(2+) site is built by aspartate 460, aspartate 462, and aspartate 464. Residues cysteine 890, cysteine 964, cysteine 971, and cysteine 974 each coordinate Zn(2+).

It belongs to the RNA polymerase beta' chain family. As to quaternary structure, the RNAP catalytic core consists of 2 alpha, 1 beta, 1 beta' and 1 omega subunit. When a sigma factor is associated with the core the holoenzyme is formed, which can initiate transcription. Mg(2+) serves as cofactor. The cofactor is Zn(2+).

It carries out the reaction RNA(n) + a ribonucleoside 5'-triphosphate = RNA(n+1) + diphosphate. In terms of biological role, DNA-dependent RNA polymerase catalyzes the transcription of DNA into RNA using the four ribonucleoside triphosphates as substrates. The chain is DNA-directed RNA polymerase subunit beta' from Desulfosudis oleivorans (strain DSM 6200 / JCM 39069 / Hxd3) (Desulfococcus oleovorans).